A 196-amino-acid polypeptide reads, in one-letter code: Lipoprotein signal peptidase (196 aa).

3 consecutive transmembrane segments (helical) span residues 43–63 (LMLKVTAFLNMVYTWNYGISF), 75–95 (AVFILTNSIIVCYLYYLMVCS), and 100–120 (GFAGYSFVIGGAVGNLIDRLF). Active-site residues include aspartate 126 and aspartate 144. The chain crosses the membrane as a helical span at residues 135–155 (YSFPVFNLADCFITIGVIILI).

It belongs to the peptidase A8 family.

It localises to the cell inner membrane. It catalyses the reaction Release of signal peptides from bacterial membrane prolipoproteins. Hydrolyzes -Xaa-Yaa-Zaa-|-(S,diacylglyceryl)Cys-, in which Xaa is hydrophobic (preferably Leu), and Yaa (Ala or Ser) and Zaa (Gly or Ala) have small, neutral side chains.. It functions in the pathway protein modification; lipoprotein biosynthesis (signal peptide cleavage). Functionally, this protein specifically catalyzes the removal of signal peptides from prolipoproteins. The sequence is that of Lipoprotein signal peptidase from Rickettsia canadensis (strain McKiel).